The sequence spans 151 residues: Ribosome maturation factor RimP (151 aa).

Belongs to the RimP family.

The protein localises to the cytoplasm. Its function is as follows. Required for maturation of 30S ribosomal subunits. This chain is Ribosome maturation factor RimP, found in Endomicrobium trichonymphae.